The chain runs to 392 residues: Dihydroorotate dehydrogenase (quinone) (392 aa).

FMN-binding positions include 90 to 94 (AGFDK) and T114. K94 is a substrate binding site. Residue 139-143 (NRMGF) participates in substrate binding. FMN-binding residues include N173 and N206. N206 contacts substrate. Catalysis depends on S209, which acts as the Nucleophile. N211 serves as a coordination point for substrate. FMN is bound by residues K243 and V271. 272 to 273 (NT) is a substrate binding site. FMN-binding positions include G301, G330, and 351 to 352 (YT).

The protein belongs to the dihydroorotate dehydrogenase family. Type 2 subfamily. In terms of assembly, monomer. It depends on FMN as a cofactor.

It localises to the cell membrane. The enzyme catalyses (S)-dihydroorotate + a quinone = orotate + a quinol. Its pathway is pyrimidine metabolism; UMP biosynthesis via de novo pathway; orotate from (S)-dihydroorotate (quinone route): step 1/1. In terms of biological role, catalyzes the conversion of dihydroorotate to orotate with quinone as electron acceptor. The chain is Dihydroorotate dehydrogenase (quinone) from Prochlorococcus marinus (strain MIT 9313).